The primary structure comprises 658 residues: Endoplasmic reticulum chaperone BiP (658 aa).

A signal peptide spans 1 to 19 (MVTMKLFALVLLVSASVFA). ATP-binding positions include 38–41 (GTTY), Lys98, 228–230 (GGT), 294–301 (EKAKRALS), and 365–368 (GSTR). The nucleotide-binding (NBD) stretch occupies residues 127-281 (KPYIEVDIGD…KKKTGKDVRA (155 aa)). The tract at residues 410 to 420 (QDTGDLVLLDV) is interdomain linker. The interval 421-501 (CPLTLGIETV…PRGVPQIEVT (81 aa)) is substrate-binding (SBD). Residues 634–658 (KLYGGAGAPPPEGAEGAEETEKDEL) are disordered. Positions 648-658 (EGAEETEKDEL) are enriched in acidic residues. Positions 655-658 (KDEL) match the Prevents secretion from ER motif.

It belongs to the heat shock protein 70 family. In terms of assembly, monomer and homooligomer; homooligomerization via the interdomain linker inactivates the chaperone activity and acts as a storage of hspa5/BiP molecules. Interacts with DNAJC10. Interacts with dnajb9/ERdj4; leading to recruit hspa5/BiP to ern1/ire1. Interacts with ern1/ire1; interaction takes place following interaction with dnajb9/ERdj4 and leads to inactivate ern1/IRE1.

The protein localises to the endoplasmic reticulum lumen. The catalysed reaction is ATP + H2O = ADP + phosphate + H(+). Its activity is regulated as follows. The chaperone activity is regulated by ATP-induced allosteric coupling of the nucleotide-binding (NBD) and substrate-binding (SBD) domains. In the ADP-bound and nucleotide-free (apo) states, the two domains have little interaction. In contrast, in the ATP-bound state the two domains are tightly coupled, which results in drastically accelerated kinetics in both binding and release of polypeptide substrates. J domain-containing co-chaperones (dnajb9/ERdj4 or dnajc10/ERdj5) stimulate the ATPase activity and are required for efficient substrate recognition by hspa5/BiP. Homooligomerization inactivates participating hspa5/BiP protomers and probably act as reservoirs to store hspa5/BiP molecules when they are not needed by the cell. Endoplasmic reticulum chaperone that plays a key role in protein folding and quality control in the endoplasmic reticulum lumen. Involved in the correct folding of proteins and degradation of misfolded proteins via its interaction with dnajc10/ERdj5, probably to facilitate the release of dnajc10/ERdj5 from its substrate. Acts as a key repressor of the EIF2AK3/PERK and ERN1/IRE1-mediated unfolded protein response (UPR). In the unstressed endoplasmic reticulum, recruited by DNAJB9/ERdj4 to the luminal region of ERN1/IRE1, leading to disrupt the dimerization of ERN1/IRE1, thereby inactivating ERN1/IRE1. Also binds and inactivates EIF2AK3/PERK in unstressed cells. Accumulation of misfolded protein in the endoplasmic reticulum causes release of HSPA5/BiP from ERN1/IRE1 and EIF2AK3/PERK, allowing their homodimerization and subsequent activation. This is Endoplasmic reticulum chaperone BiP from Xenopus laevis (African clawed frog).